A 124-amino-acid chain; its full sequence is MSTKINSLLEEIKSLTLLEAAELVKQMETTFGIDASAVATAAPAVQVETKKEEKTEFALVLSQVPADKKINVLKVVRTITGLGLKEAKELVDSVPKTLKEGLSASEAEQLKTQLTEAGAQVELK.

It belongs to the bacterial ribosomal protein bL12 family. As to quaternary structure, homodimer. Part of the ribosomal stalk of the 50S ribosomal subunit. Forms a multimeric L10(L12)X complex, where L10 forms an elongated spine to which 2 to 4 L12 dimers bind in a sequential fashion. Binds GTP-bound translation factors.

The protein localises to the plastid. Its subcellular location is the chloroplast. Forms part of the ribosomal stalk which helps the ribosome interact with GTP-bound translation factors. Is thus essential for accurate translation. This Cyanidioschyzon merolae (strain NIES-3377 / 10D) (Unicellular red alga) protein is Large ribosomal subunit protein bL12c.